We begin with the raw amino-acid sequence, 517 residues long: Synaptic vesicular amine transporter (517 aa).

Over 1 to 20 the chain is Cytoplasmic; that stretch reads MALSELALLRRLQESRHSRK. A helical transmembrane segment spans residues 21-41; sequence LILFIVFLALLLDNMLLTVVV. Topologically, residues 42–132 are extracellular; the sequence is PIIPSYLYSI…EDKDLLNENV (91 aa). N-linked (GlcNAc...) asparagine glycosylation is found at asparagine 84, asparagine 91, and asparagine 112. Cysteines 120 and 327 form a disulfide. The chain crosses the membrane as a helical span at residues 133–153; it reads QVGLLFASKATVQLLTNPFIG. Over 154-162 the chain is Cytoplasmic; it reads LLTNRIGYP. Residues 163 to 183 traverse the membrane as a helical segment; it reads IPMFTGFCIMFISTVMFAFSR. Over 184-192 the chain is Extracellular; that stretch reads TYAFLLIAR. The chain crosses the membrane as a helical span at residues 193–213; the sequence is SLQGIGSSCSSVAGMGMLASV. The Cytoplasmic portion of the chain corresponds to 214-222; the sequence is YTDDEERGN. Residues 223–245 traverse the membrane as a helical segment; sequence AMGIALGGLAMGVLVGPPFGSVL. Residues leucine 231 and valine 235 each coordinate serotonin. Residues 246–251 lie on the Extracellular side of the membrane; that stretch reads YEFVGK. Residues 252–274 traverse the membrane as a helical segment; the sequence is TAPFLVLAALVLLDGAIQLFVLQ. Over 275-294 the chain is Cytoplasmic; that stretch reads PSRVQPESQKGTPLTTLLRD. A helical transmembrane segment spans residues 295–314; the sequence is PYILIAAGSICFANMGIAML. The serotonin site is built by asparagine 308, isoleucine 311, glutamate 315, phenylalanine 337, and tyrosine 344. Residues 315-331 are Extracellular-facing; it reads EPALPIWMMETMCSHKW. A helical membrane pass occupies residues 332–355; that stretch reads QLGVAFLPASVSYLIGTNVFGILA. At 356–360 the chain is on the cytoplasmic side; that stretch reads HKMGR. A helical membrane pass occupies residues 361-381; it reads WLCALLGMIIVGMSILCIPLA. Residues 382–392 are Extracellular-facing; sequence KNIYGLIAPNF. A helical transmembrane segment spans residues 393 to 413; sequence GVGFAIGMVDSSMMPIMGYLV. Residue aspartate 402 participates in serotonin binding. The Cytoplasmic portion of the chain corresponds to 414-417; that stretch reads DLRH. A helical transmembrane segment spans residues 418-438; it reads VSVYGSVYAIADVAFCMGYAI. Residue tyrosine 436 coordinates serotonin. Residues 439 to 443 are Extracellular-facing; that stretch reads GPSAG. The helical transmembrane segment at 444–465 threads the bilayer; it reads GAIAKAIGFPWLMTIIGIIDIL. At 466 to 517 the chain is on the cytoplasmic side; that stretch reads FAPLCFFLRSPPAKEEKMAILMDHNCPIKTKMYTQNSSQSHPIGEDEESESD. Serine 514 and serine 516 each carry phosphoserine; by CK2.

This sequence belongs to the major facilitator superfamily. Vesicular transporter family. Interacts with SLC6A3.

Its subcellular location is the cytoplasmic vesicle. It is found in the secretory vesicle. It localises to the synaptic vesicle membrane. The protein localises to the secretory vesicle membrane. The protein resides in the cell projection. Its subcellular location is the axon. It is found in the dendrite. It carries out the reaction serotonin(in) + 2 H(+)(out) = serotonin(out) + 2 H(+)(in). The catalysed reaction is dopamine(in) + 2 H(+)(out) = dopamine(out) + 2 H(+)(in). The enzyme catalyses histamine(in) + 2 H(+)(out) = histamine(out) + 2 H(+)(in). Its activity is regulated as follows. Strongly inhibited by reserpine and tetrabenazine. Also inhibited to a lesser extent by ketanserin and fenfluramine. Reserpine and ketanserin inhibit by blocking the substrate-binding pocket. Tetrabenazine traps SLC18A2/VMAT2 in an occluded conformation and its inhibition is specific to SLC18A2/VMAT2 but not SLC18A1/VMAT1. Functionally, electrogenic antiporter that exchanges one cationic monoamine with two intravesicular protons across the membrane of secretory and synaptic vesicles. Uses the electrochemical proton gradient established by the V-type proton-pump ATPase to accumulate high concentrations of monoamines inside the vesicles prior to their release via exocytosis. Transports a variety of catecholamines such as dopamine, adrenaline and noradrenaline, histamine, and indolamines such as serotonin. Regulates the transvesicular monoaminergic gradient that determines the quantal size. Mediates somatodendritic dopamine release in hippocampal neurons, likely as part of a regulated secretory pathway that integrates retrograde synaptic signals. Acts as a primary transporter for striatal dopamine loading ensuring impulse-dependent release of dopamine at the synaptic cleft. Responsible for histamine and serotonin storage and subsequent corelease from mast cell granules. This Bos taurus (Bovine) protein is Synaptic vesicular amine transporter (SLC18A2).